The primary structure comprises 873 residues: Calmodulin-dependent glutamylase SidJ (873 aa).

The interval 16 to 90 is disordered; it reads QSEDNPSETA…TTSTTKQKGP (75 aa). Residues 22–58 are compositionally biased toward polar residues; it reads SETAVETTDVSTKIKTTDTTQEESSVKTKTVVPTQPG. 2 residues coordinate Mg(2+): Asp-542 and Asp-545. Residues 851–873 are disordered; the sequence is NLSEKSDIDSEKPESERTTDKRL.

Interacts with host calmodulin/CALM1; this interaction is required for glutamylase activity. Requires Mg(2+) as cofactor.

The enzyme catalyses L-glutamyl-[protein] + L-glutamate + ATP = gamma-L-glutamyl-L-glutamyl-[protein] + ADP + phosphate + H(+). It carries out the reaction (L-glutamyl)(n)-gamma-L-glutamyl-L-glutamyl-[protein] + L-glutamate + ATP = (L-glutamyl)(n+1)-gamma-L-glutamyl-L-glutamyl-[protein] + ADP + phosphate + H(+). Its activity is regulated as follows. Glytamylation catalyzed by SidJ requires host calmodulin and can be regulated by intracellular changes in Ca2+ concentrations. Also requires ATP. Glutamylase that mediates the covalent attachment of glutamate moieties to SdeA on one of the catalytic residues that is required for its mono-ADP-ribosyltransferase activity. In turn, inhibits SdeA ubiquitinating activity. Also glutamylates related SdeB, SdeC and SidE. Glutamylase activity only occurs in the host since it requires host calmodulin. May also reverse the SdeA-mediated substrate ubiquitination by cleaving the phosphodiester bond that links phosphoribosylated ubiquitin to protein substrates via its deubiquitinase activity. In Legionella pneumophila subsp. pneumophila (strain Philadelphia 1 / ATCC 33152 / DSM 7513), this protein is Calmodulin-dependent glutamylase SidJ.